Consider the following 446-residue polypeptide: Bifunctional protein GlmU (446 aa).

The segment at 1 to 228 (MTKTAAVILA…AEELLGVNSR (228 aa)) is pyrophosphorylase. Residues 9–12 (LAAG), Lys-23, Gln-72, 77–78 (GT), 100–102 (YGD), Gly-140, Glu-154, Asn-169, and Asn-226 each bind UDP-N-acetyl-alpha-D-glucosamine. A Mg(2+)-binding site is contributed by Asp-102. Asn-226 provides a ligand contact to Mg(2+). Residues 229–249 (SELAAAEAVIQGRLREKAMEG) are linker. Residues 250–446 (GATLTAPETV…AHMRRLTGKN (197 aa)) are N-acetyltransferase. The UDP-N-acetyl-alpha-D-glucosamine site is built by Arg-315 and Lys-333. His-345 (proton acceptor) is an active-site residue. UDP-N-acetyl-alpha-D-glucosamine-binding residues include Tyr-348 and Asn-359. Residues Ala-362, 368–369 (NY), Ser-387, Ala-405, and Arg-422 each bind acetyl-CoA.

In the N-terminal section; belongs to the N-acetylglucosamine-1-phosphate uridyltransferase family. This sequence in the C-terminal section; belongs to the transferase hexapeptide repeat family. Homotrimer. Requires Mg(2+) as cofactor.

The protein localises to the cytoplasm. It carries out the reaction alpha-D-glucosamine 1-phosphate + acetyl-CoA = N-acetyl-alpha-D-glucosamine 1-phosphate + CoA + H(+). It catalyses the reaction N-acetyl-alpha-D-glucosamine 1-phosphate + UTP + H(+) = UDP-N-acetyl-alpha-D-glucosamine + diphosphate. Its pathway is nucleotide-sugar biosynthesis; UDP-N-acetyl-alpha-D-glucosamine biosynthesis; N-acetyl-alpha-D-glucosamine 1-phosphate from alpha-D-glucosamine 6-phosphate (route II): step 2/2. It functions in the pathway nucleotide-sugar biosynthesis; UDP-N-acetyl-alpha-D-glucosamine biosynthesis; UDP-N-acetyl-alpha-D-glucosamine from N-acetyl-alpha-D-glucosamine 1-phosphate: step 1/1. It participates in bacterial outer membrane biogenesis; LPS lipid A biosynthesis. Its function is as follows. Catalyzes the last two sequential reactions in the de novo biosynthetic pathway for UDP-N-acetylglucosamine (UDP-GlcNAc). The C-terminal domain catalyzes the transfer of acetyl group from acetyl coenzyme A to glucosamine-1-phosphate (GlcN-1-P) to produce N-acetylglucosamine-1-phosphate (GlcNAc-1-P), which is converted into UDP-GlcNAc by the transfer of uridine 5-monophosphate (from uridine 5-triphosphate), a reaction catalyzed by the N-terminal domain. The chain is Bifunctional protein GlmU from Rhodospirillum rubrum (strain ATCC 11170 / ATH 1.1.1 / DSM 467 / LMG 4362 / NCIMB 8255 / S1).